The chain runs to 652 residues: Phosphomethylpyrimidine synthase (652 aa).

Substrate-binding positions include Asn-235, Met-264, Tyr-293, His-329, Ser-349–Gly-351, Asp-390–Arg-393, and Glu-429. Residue His-433 participates in Zn(2+) binding. Position 456 (Tyr-456) interacts with substrate. Residue His-497 participates in Zn(2+) binding. 3 residues coordinate [4Fe-4S] cluster: Cys-577, Cys-580, and Cys-585.

This sequence belongs to the ThiC family. Homodimer. It depends on [4Fe-4S] cluster as a cofactor.

The catalysed reaction is 5-amino-1-(5-phospho-beta-D-ribosyl)imidazole + S-adenosyl-L-methionine = 4-amino-2-methyl-5-(phosphooxymethyl)pyrimidine + CO + 5'-deoxyadenosine + formate + L-methionine + 3 H(+). It functions in the pathway cofactor biosynthesis; thiamine diphosphate biosynthesis. In terms of biological role, catalyzes the synthesis of the hydroxymethylpyrimidine phosphate (HMP-P) moiety of thiamine from aminoimidazole ribotide (AIR) in a radical S-adenosyl-L-methionine (SAM)-dependent reaction. The protein is Phosphomethylpyrimidine synthase of Shewanella sediminis (strain HAW-EB3).